A 767-amino-acid chain; its full sequence is Probable NADP-dependent malic enzyme (767 aa).

Residues 1 to 430 (MDEMNKINYT…QLGSRLNPTA (430 aa)) form a malic enzyme region. The active-site Proton donor is tyrosine 42. The active-site Proton acceptor is lysine 97. A divalent metal cation is bound by residues glutamate 139, aspartate 140, and aspartate 165. NADP(+)-binding positions include 198 to 201 (AGAA), asparagine 290, and asparagine 322. Positions 431–767 (NYMNFLAEKI…FACVEAIKEV (337 aa)) are phosphate acetyltransferase.

This sequence in the N-terminal section; belongs to the malic enzymes family. The protein in the C-terminal section; belongs to the phosphate acetyltransferase and butyryltransferase family. Mg(2+) serves as cofactor. The cofactor is Mn(2+).

The enzyme catalyses (S)-malate + NADP(+) = pyruvate + CO2 + NADPH. It carries out the reaction oxaloacetate + H(+) = pyruvate + CO2. This is Probable NADP-dependent malic enzyme from Rickettsia prowazekii (strain Madrid E).